Reading from the N-terminus, the 580-residue chain is Glutamine--tRNA ligase (580 aa).

Positions 41–51 match the 'HIGH' region motif; sequence PEPNGYLHIGH. ATP-binding positions include 42 to 44 and 48 to 54; these read EPN and HIGHAKA. L-glutamine-binding residues include D74 and Y218. Residues T237, 285-286, and 293-295 each bind ATP; these read RL and MSK. Residues 292-296 carry the 'KMSKS' region motif; that stretch reads VMSKR.

The protein belongs to the class-I aminoacyl-tRNA synthetase family. In terms of assembly, monomer.

The protein localises to the cytoplasm. It catalyses the reaction tRNA(Gln) + L-glutamine + ATP = L-glutaminyl-tRNA(Gln) + AMP + diphosphate. The sequence is that of Glutamine--tRNA ligase from Xylella fastidiosa (strain 9a5c).